We begin with the raw amino-acid sequence, 131 residues long: Aspartate 1-decarboxylase (131 aa).

The active-site Schiff-base intermediate with substrate; via pyruvic acid is S25. The residue at position 25 (S25) is a Pyruvic acid (Ser). Position 57 (T57) interacts with substrate. The Proton donor role is filled by Y58. G73 to A75 provides a ligand contact to substrate.

Belongs to the PanD family. As to quaternary structure, heterooctamer of four alpha and four beta subunits. Pyruvate serves as cofactor. Is synthesized initially as an inactive proenzyme, which is activated by self-cleavage at a specific serine bond to produce a beta-subunit with a hydroxyl group at its C-terminus and an alpha-subunit with a pyruvoyl group at its N-terminus.

It localises to the cytoplasm. The enzyme catalyses L-aspartate + H(+) = beta-alanine + CO2. The protein operates within cofactor biosynthesis; (R)-pantothenate biosynthesis; beta-alanine from L-aspartate: step 1/1. In terms of biological role, catalyzes the pyruvoyl-dependent decarboxylation of aspartate to produce beta-alanine. This is Aspartate 1-decarboxylase from Chlorobium phaeobacteroides (strain DSM 266 / SMG 266 / 2430).